The primary structure comprises 395 residues: Protein NDRG1 (395 aa).

The interval 325-395 (RSRTGSAASS…NTPKSMEISC (71 aa)) is disordered. Over residues 326–339 (SRTGSAASSSSQDG) the composition is skewed to low complexity. Repeat copies occupy residues 339–348 (GNRSRSHTNE), 349–358 (GSRSRSHTGD), 359–368 (GNRSRAHTGD), and 369–378 (GNRSRSHTDS). Residues 339–378 (GNRSRSHTNEGSRSRSHTGDGNRSRAHTGDGNRSRSHTDS) form a 4 X 10 AA tandem repeats of G-[NS]-R-S-R-[AS]-H-T-[DGN]-[DES] region. Residues 345–376 (HTNEGSRSRSHTGDGNRSRAHTGDGNRSRSHT) are compositionally biased toward basic and acidic residues. Positions 377 to 389 (DSNNTNSEHNTPK) are enriched in polar residues.

The protein belongs to the NDRG family.

Its function is as follows. May be involved in pronephros development, after specification of the pronephros. In Xenopus tropicalis (Western clawed frog), this protein is Protein NDRG1.